The following is a 123-amino-acid chain: MMSALFLVLSVSLLVSGLQGIGEATSEIKESPLCSLMEERLPDLCEVQVKIDPHYCQDHFSSCPRTCLRCKRPQKPPAPPRECKDLRTDCPRAMHSYGMDICREMSSYASMYCKSYCKLCNKR.

Residues 1–17 (MMSALFLVLSVSLLVSG) form the signal peptide.

In terms of processing, contains 6 disulfide bonds. As to expression, expressed in acontia, a specialised envenomation structure laden with batteries of venom-containing nematocysts found only in the superfamily Metridioidea.

The protein resides in the secreted. Its subcellular location is the nematocyst. Functionally, cysteine-rich protein with probable toxin activity. The protein is Unknown 12C protein of Calliactis polypus (Hermit crab anemone).